An 85-amino-acid polypeptide reads, in one-letter code: ATP synthase subunit c (85 aa).

The next 2 membrane-spanning stretches (helical) occupy residues isoleucine 10–leucine 30 and phenylalanine 53–phenylalanine 73.

It belongs to the ATPase C chain family. In terms of assembly, F-type ATPases have 2 components, F(1) - the catalytic core - and F(0) - the membrane proton channel. F(1) has five subunits: alpha(3), beta(3), gamma(1), delta(1), epsilon(1). F(0) has three main subunits: a(1), b(2) and c(10-14). The alpha and beta chains form an alternating ring which encloses part of the gamma chain. F(1) is attached to F(0) by a central stalk formed by the gamma and epsilon chains, while a peripheral stalk is formed by the delta and b chains.

Its subcellular location is the cell inner membrane. F(1)F(0) ATP synthase produces ATP from ADP in the presence of a proton or sodium gradient. F-type ATPases consist of two structural domains, F(1) containing the extramembraneous catalytic core and F(0) containing the membrane proton channel, linked together by a central stalk and a peripheral stalk. During catalysis, ATP synthesis in the catalytic domain of F(1) is coupled via a rotary mechanism of the central stalk subunits to proton translocation. Functionally, key component of the F(0) channel; it plays a direct role in translocation across the membrane. A homomeric c-ring of between 10-14 subunits forms the central stalk rotor element with the F(1) delta and epsilon subunits. The sequence is that of ATP synthase subunit c from Idiomarina loihiensis (strain ATCC BAA-735 / DSM 15497 / L2-TR).